We begin with the raw amino-acid sequence, 170 residues long: NADH-quinone oxidoreductase subunit B (170 aa).

Positions 37, 38, 102, and 131 each coordinate [4Fe-4S] cluster.

Belongs to the complex I 20 kDa subunit family. In terms of assembly, NDH-1 is composed of 14 different subunits. Subunits NuoB, C, D, E, F, and G constitute the peripheral sector of the complex. [4Fe-4S] cluster is required as a cofactor.

Its subcellular location is the cell inner membrane. The enzyme catalyses a quinone + NADH + 5 H(+)(in) = a quinol + NAD(+) + 4 H(+)(out). Its function is as follows. NDH-1 shuttles electrons from NADH, via FMN and iron-sulfur (Fe-S) centers, to quinones in the respiratory chain. The immediate electron acceptor for the enzyme in this species is believed to be ubiquinone. Couples the redox reaction to proton translocation (for every two electrons transferred, four hydrogen ions are translocated across the cytoplasmic membrane), and thus conserves the redox energy in a proton gradient. In Geotalea daltonii (strain DSM 22248 / JCM 15807 / FRC-32) (Geobacter daltonii), this protein is NADH-quinone oxidoreductase subunit B.